An 832-amino-acid polypeptide reads, in one-letter code: Golgin subfamily A member 6-like protein 24 (832 aa).

Disordered regions lie at residues 1–107 (MWPQ…QEAL), 303–333 (QEQEEKIREQEEKMRRQEEMMWEKEEKMRRQ), 351–431 (MHEQ…EMWR), 508–652 (QEEM…EQEE), and 664–832 (QEEM…MQEH). The span at 13-27 (LPTHPHLPTHPHLPT) shows a compositional bias: basic residues. Residues 37–58 (MSKETRQSKLAEAKEQLTDHHP) are compositionally biased toward basic and acidic residues. Polar residues-rich tracts occupy residues 59-69 (QTNPSVGTAAS) and 77-89 (NNGTNPETTTSGG). Residues 92–107 (SPEDEQKASHQHQEAL) show a composition bias toward basic and acidic residues. Residues 163 to 828 (LEQALSAVAT…EVRLRQQEEK (666 aa)) adopt a coiled-coil conformation. 2 stretches are compositionally biased toward basic and acidic residues: residues 664–684 (QEEMMQEQEEKMGEQEEKMWE) and 692–832 (QEEK…MQEH).

It belongs to the GOLGA6 family.

In Homo sapiens (Human), this protein is Golgin subfamily A member 6-like protein 24.